Consider the following 635-residue polypeptide: 1-deoxy-D-xylulose-5-phosphate synthase (635 aa).

Residues His-74 and Ala-115–Ser-117 contribute to the thiamine diphosphate site. Asp-146 contacts Mg(2+). Thiamine diphosphate contacts are provided by residues Gly-147–Ala-148, Asn-176, Tyr-283, and Glu-365. Mg(2+) is bound at residue Asn-176.

This sequence belongs to the transketolase family. DXPS subfamily. Homodimer. Mg(2+) is required as a cofactor. It depends on thiamine diphosphate as a cofactor.

The enzyme catalyses D-glyceraldehyde 3-phosphate + pyruvate + H(+) = 1-deoxy-D-xylulose 5-phosphate + CO2. Its pathway is metabolic intermediate biosynthesis; 1-deoxy-D-xylulose 5-phosphate biosynthesis; 1-deoxy-D-xylulose 5-phosphate from D-glyceraldehyde 3-phosphate and pyruvate: step 1/1. Functionally, catalyzes the acyloin condensation reaction between C atoms 2 and 3 of pyruvate and glyceraldehyde 3-phosphate to yield 1-deoxy-D-xylulose-5-phosphate (DXP). The protein is 1-deoxy-D-xylulose-5-phosphate synthase of Polaromonas sp. (strain JS666 / ATCC BAA-500).